The following is a 122-amino-acid chain: Large ribosomal subunit protein bL17 (122 aa).

It belongs to the bacterial ribosomal protein bL17 family. Part of the 50S ribosomal subunit. Contacts protein L32.

The polypeptide is Large ribosomal subunit protein bL17 (Neisseria gonorrhoeae (strain ATCC 700825 / FA 1090)).